Consider the following 420-residue polypeptide: MLKHLKQVDQEVFEAVSKEFKRQQEHLEMIASENYTSYAVMEAQGSVLTNKYAEGLPHKRYYGGCEYVDIVEDLAIERLKKIYGAEHANVQPHSGSQANQAVYFSQLQAGDTIMGMSLAHGGHLTHGAKVNLSGIVFNAVQYGVNPETELIDYDQVYKLAKEHKPKMIVAGASAYSRIIDWAKFREIADEVGALLMVDMAHYAGLIAGGAYPSPVPYADFVTSTTHKTLRGPRGGFILSKAQYGKDIDKWVFPRLQGGPLMHVIAAKAVAFKEAMTEEFREYAHQTVKNAKVLAEELKAEGLRIVSGGTDSHIVLVDLRPLNVKGNQAEEALGRANITVNKNAIPFDPEKPMVTSGIRLGTAALTTRGMKENDMRRIAKNIVKVLKNLDNEKIIQEVKDDVLSLCSSYPLYPEWTEYYLD.

Residues leucine 118 and 122 to 124 each bind (6S)-5,6,7,8-tetrahydrofolate; that span reads GHL. Lysine 227 is modified (N6-(pyridoxal phosphate)lysine).

Belongs to the SHMT family. In terms of assembly, homodimer. Requires pyridoxal 5'-phosphate as cofactor.

It localises to the cytoplasm. The enzyme catalyses (6R)-5,10-methylene-5,6,7,8-tetrahydrofolate + glycine + H2O = (6S)-5,6,7,8-tetrahydrofolate + L-serine. The protein operates within one-carbon metabolism; tetrahydrofolate interconversion. Its pathway is amino-acid biosynthesis; glycine biosynthesis; glycine from L-serine: step 1/1. Its function is as follows. Catalyzes the reversible interconversion of serine and glycine with tetrahydrofolate (THF) serving as the one-carbon carrier. This reaction serves as the major source of one-carbon groups required for the biosynthesis of purines, thymidylate, methionine, and other important biomolecules. Also exhibits THF-independent aldolase activity toward beta-hydroxyamino acids, producing glycine and aldehydes, via a retro-aldol mechanism. The protein is Serine hydroxymethyltransferase of Persephonella marina (strain DSM 14350 / EX-H1).